The chain runs to 183 residues: ATP-dependent protease subunit HslV (183 aa).

Residue Thr2 is part of the active site. Na(+)-binding residues include Gly157, Cys160, and Thr163.

It belongs to the peptidase T1B family. HslV subfamily. A double ring-shaped homohexamer of HslV is capped on each side by a ring-shaped HslU homohexamer. The assembly of the HslU/HslV complex is dependent on binding of ATP.

It localises to the cytoplasm. The enzyme catalyses ATP-dependent cleavage of peptide bonds with broad specificity.. Its activity is regulated as follows. Allosterically activated by HslU binding. Its function is as follows. Protease subunit of a proteasome-like degradation complex believed to be a general protein degrading machinery. In Vibrio campbellii (strain ATCC BAA-1116), this protein is ATP-dependent protease subunit HslV.